A 63-amino-acid chain; its full sequence is Large ribosomal subunit protein bL28 (63 aa).

This sequence belongs to the bacterial ribosomal protein bL28 family.

The polypeptide is Large ribosomal subunit protein bL28 (Clostridium botulinum (strain ATCC 19397 / Type A)).